The chain runs to 284 residues: Diaminopimelate epimerase (284 aa).

Substrate is bound by residues N13 and N70. The Proton donor role is filled by C79. Substrate is bound by residues 80–81, N167, N200, and 218–219; these read GN and ER. C227 (proton acceptor) is an active-site residue. Residue 228–229 coordinates substrate; that stretch reads GT.

This sequence belongs to the diaminopimelate epimerase family. Homodimer.

Its subcellular location is the cytoplasm. The catalysed reaction is (2S,6S)-2,6-diaminopimelate = meso-2,6-diaminopimelate. It participates in amino-acid biosynthesis; L-lysine biosynthesis via DAP pathway; DL-2,6-diaminopimelate from LL-2,6-diaminopimelate: step 1/1. Functionally, catalyzes the stereoinversion of LL-2,6-diaminopimelate (L,L-DAP) to meso-diaminopimelate (meso-DAP), a precursor of L-lysine and an essential component of the bacterial peptidoglycan. In Prochlorococcus marinus (strain NATL2A), this protein is Diaminopimelate epimerase.